The primary structure comprises 1170 residues: Cellulose synthase-like protein D2 (1170 aa).

Disordered regions lie at residues 1-48 (MASS…RRTH), 54-73 (SYSRDDLDSELGNSGDMSPE), and 269-295 (NEVDNGGGGGGGGGLGGGDGQPAEFTS). Positions 10 to 24 (RHSNSSRLSRMSYSG) are enriched in low complexity. Over residues 273–288 (NGGGGGGGGGLGGGDG) the composition is skewed to gly residues. 2 consecutive transmembrane segments (helical) span residues 311–331 (VLSPYRLLILIRMAVLGLFLA) and 341–361 (AMWLWGMSVVCELWFGLSWLL). The active site involves D441. A coiled-coil region spans residues 527–551 (HAREEIKAMKRQREAALDDVVEAVK). Residue D873 is part of the active site. 6 helical membrane passes run 955-975 (IFLIVYCFLPALSLFSGQFIV), 981-1001 (TFLTYLLVITLTMCMLAVLEI), 1027-1047 (LAAVLQGLLKVIAGIEISFTL), 1070-1090 (SLMIPPIVIMMVNLIAIAVGF), 1104-1124 (LLGGVFFSFWVLAHLYPFAKG), and 1134-1154 (TIVFVWSGLLAITISLLWVAI).

It belongs to the glycosyltransferase 2 family. Plant cellulose synthase-like D subfamily.

It is found in the golgi apparatus membrane. In terms of biological role, thought to be a Golgi-localized beta-glycan synthase that polymerize the backbones of noncellulosic polysaccharides (hemicelluloses) of plant cell wall. The chain is Cellulose synthase-like protein D2 (CSLD2) from Oryza sativa subsp. japonica (Rice).